Consider the following 348-residue polypeptide: UPF0324 membrane protein BPP3732 (348 aa).

10 helical membrane passes run 20–39 (GILF…DLPF), 43–62 (FGFS…GNFL), 98–120 (IAAV…LLIG), 135–157 (AMLT…EPTL), 164–186 (SAVA…PVIY), 196–215 (QALG…VVGA), 235–257 (VALL…AAGA), 267–286 (VPWF…LDIL), 299–318 (VFVL…FAQI), and 322–344 (GPRV…YGIV).

Belongs to the UPF0324 family.

Its subcellular location is the cell membrane. In Bordetella parapertussis (strain 12822 / ATCC BAA-587 / NCTC 13253), this protein is UPF0324 membrane protein BPP3732.